The primary structure comprises 111 residues: Thioredoxin 2 (111 aa).

The 108-residue stretch at 2–109 (SKGVITITDA…LLSFLDTHLN (108 aa)) folds into the Thioredoxin domain. C33 and C36 form a disulfide bridge.

Belongs to the thioredoxin family.

In terms of biological role, participates in various redox reactions through the reversible oxidation of its active center dithiol to a disulfide and catalyzes dithiol-disulfide exchange reactions. In Nostoc sp. (strain PCC 7120 / SAG 25.82 / UTEX 2576), this protein is Thioredoxin 2 (trxB).